Here is a 928-residue protein sequence, read N- to C-terminus: DNA-binding protein RFX6 (928 aa).

Disordered stretches follow at residues 1-22 and 53-102; these read MAKV…QVSP and PGGA…AADL. Basic and acidic residues predominate over residues 92 to 101; that stretch reads SHDSKTKAAD. Residues 124–199 constitute a DNA-binding region (RFX-type winged-helix); the sequence is TLQWLEENYI…YHYYGIGIKE (76 aa).

This sequence belongs to the RFX family. Interacts with RFX3.

The protein localises to the nucleus. Its function is as follows. Transcription factor required to direct islet cell differentiation during endocrine pancreas development. Specifically required for the differentiation of 4 of the 5 islet cell types and for the production of insulin. Not required for pancreatic PP (polypeptide-producing) cells differentiation. Acts downstream of NEUROG3 and regulates the transcription factors involved in beta-cell maturation and function, thereby restricting the expression of the beta-cell differentiation and specification genes, and thus the beta-cell fate choice. Activates transcription by forming a heterodimer with RFX3 and binding to the X-box in the promoter of target genes. Involved in glucose-stimulated insulin secretion by promoting insulin and L-type calcium channel gene transcription. The sequence is that of DNA-binding protein RFX6 (RFX6) from Ailuropoda melanoleuca (Giant panda).